We begin with the raw amino-acid sequence, 599 residues long: Cartilage intermediate layer protein 1 (599 aa).

Residues Asn-47, Asn-416, and Asn-472 are each glycosylated (N-linked (GlcNAc...) asparagine). Residues 550–560 (QSTSARPSPAS) are compositionally biased toward polar residues. The tract at residues 550–599 (QSTSARPSPASTVRGRAPSRRQRASSGSQRQPRGVASLRFPGVAQQPLSN) is disordered. Low complexity predominate over residues 573-583 (ASSGSQRQPRG).

As to quaternary structure, monomer. Interacts with TGFB1. Post-translationally, cleaved into 2 chains possibly by a furin-like protease upon or preceding secretion. Specifically expressed in cartilage. Expressed at lower level in young cartilage than in adult cartilage. In adult cartilage, it is highly expressed throughout middeep zones.

It localises to the secreted. The protein resides in the extracellular space. Its subcellular location is the extracellular matrix. Its function is as follows. Probably plays a role in cartilage scaffolding. May act by antagonizing TGF-beta1 (TGFB1) and IGF1 functions. Has the ability to suppress IGF1-induced proliferation and sulfated proteoglycan synthesis, and inhibits ligand-induced IGF1R autophosphorylation. May inhibit TGFB1-mediated induction of cartilage matrix genes via its interaction with TGFB1. Overexpression may lead to impair chondrocyte growth and matrix repair and indirectly promote inorganic pyrophosphate (PPi) supersaturation in aging and osteoarthritis cartilage. This is Cartilage intermediate layer protein 1 (CILP) from Sus scrofa (Pig).